The sequence spans 128 residues: Large ribosomal subunit protein bL12c (128 aa).

The tract at residues 103–128 (QEGLGKDAAEDAKKQIEDAGGKVSLT) is disordered. Over residues 106–122 (LGKDAAEDAKKQIEDAG) the composition is skewed to basic and acidic residues.

The protein belongs to the bacterial ribosomal protein bL12 family. As to quaternary structure, homodimer. Part of the ribosomal stalk of the 50S ribosomal subunit. Forms a multimeric L10(L12)X complex, where L10 forms an elongated spine to which 2 to 4 L12 dimers bind in a sequential fashion. Binds GTP-bound translation factors.

Its subcellular location is the plastid. The protein localises to the chloroplast. Functionally, forms part of the ribosomal stalk which helps the ribosome interact with GTP-bound translation factors. Is thus essential for accurate translation. The chain is Large ribosomal subunit protein bL12c from Thalassiosira pseudonana (Marine diatom).